Here is a 326-residue protein sequence, read N- to C-terminus: MCPLTLHVTGLMNVSEPNSSFAFVNEFILQGFSCEWTIQIFLFSLFTTIYALTITGNGAIAFVLWCDRRLHTPMYMFLGNFSFLEIWYVSSTVPKMLVNFLSEKKNISFAGCFLQFYFFFSLGTSECLLLTVMAFDQYLAICRPLLYPNIMTGHLYAKLVILCWVCGFLWFLIPIVLISQKPFCGPNIIDHVVCDPGPLFALDCVSAPRIQLFCYTLSSLVIFGNFLFIIGSYTLVLKAVLGMPSSTGRHKAFSTCGSHLAVVSLCYSPLMVMYVSPGLGHSTGMQKIETLFYAMVTPLFNPLIYSLQNKEIKAALRKVLGSSNII.

Residues 1–44 are Extracellular-facing; the sequence is MCPLTLHVTGLMNVSEPNSSFAFVNEFILQGFSCEWTIQIFLFS. Residues Asn-13 and Asn-18 are each glycosylated (N-linked (GlcNAc...) asparagine). A helical membrane pass occupies residues 45–65; sequence LFTTIYALTITGNGAIAFVLW. At 66–72 the chain is on the cytoplasmic side; the sequence is CDRRLHT. The chain crosses the membrane as a helical span at residues 73-93; the sequence is PMYMFLGNFSFLEIWYVSSTV. At 94-112 the chain is on the extracellular side; the sequence is PKMLVNFLSEKKNISFAGC. N-linked (GlcNAc...) asparagine glycosylation is present at Asn-106. An intrachain disulfide couples Cys-112 to Cys-194. The helical transmembrane segment at 113–133 threads the bilayer; that stretch reads FLQFYFFFSLGTSECLLLTVM. The Cytoplasmic segment spans residues 134–158; the sequence is AFDQYLAICRPLLYPNIMTGHLYAK. Residues 159-179 form a helical membrane-spanning segment; it reads LVILCWVCGFLWFLIPIVLIS. Residues 180-216 are Extracellular-facing; that stretch reads QKPFCGPNIIDHVVCDPGPLFALDCVSAPRIQLFCYT. Residues 217–237 form a helical membrane-spanning segment; it reads LSSLVIFGNFLFIIGSYTLVL. The Cytoplasmic segment spans residues 238-259; that stretch reads KAVLGMPSSTGRHKAFSTCGSH. The chain crosses the membrane as a helical span at residues 260–280; that stretch reads LAVVSLCYSPLMVMYVSPGLG. Over 281-287 the chain is Extracellular; the sequence is HSTGMQK. A helical transmembrane segment spans residues 288–308; it reads IETLFYAMVTPLFNPLIYSLQ. Residues 309 to 326 lie on the Cytoplasmic side of the membrane; the sequence is NKEIKAALRKVLGSSNII.

Belongs to the G-protein coupled receptor 1 family.

It localises to the cell membrane. Odorant receptor. The sequence is that of Olfactory receptor 11H2 (OR11H2) from Homo sapiens (Human).